We begin with the raw amino-acid sequence, 236 residues long: Small ribosomal subunit protein uS2c (236 aa).

It belongs to the universal ribosomal protein uS2 family.

The protein resides in the plastid. It localises to the chloroplast. The chain is Small ribosomal subunit protein uS2c (rps2) from Barbarea verna (Land cress).